The sequence spans 368 residues: Alanine racemase (368 aa).

Lysine 40 (proton acceptor; specific for D-alanine) is an active-site residue. Position 40 is an N6-(pyridoxal phosphate)lysine (lysine 40). Arginine 134 contacts substrate. Catalysis depends on tyrosine 263, which acts as the Proton acceptor; specific for L-alanine. Methionine 310 is a substrate binding site.

This sequence belongs to the alanine racemase family. Requires pyridoxal 5'-phosphate as cofactor.

The enzyme catalyses L-alanine = D-alanine. It participates in amino-acid biosynthesis; D-alanine biosynthesis; D-alanine from L-alanine: step 1/1. Catalyzes the interconversion of L-alanine and D-alanine. May also act on other amino acids. The sequence is that of Alanine racemase (alr) from Listeria monocytogenes serotype 1/2a (strain 10403S).